The sequence spans 349 residues: MSPNPSQQSSAVAFHPSAAPITLPESATWPLADVLALFELPFNDLMFQAQQTHRAHFPKGDVELATLLSIKTGGCEEDCSYCPQAARYDTGVEAQKILELEQVLDAAREARASGATRFCMGAAWRSPKERDLEKVEAMVRGVKQLGLETCATLGMLEEGQADRLKQAGLDYYNHNLDSAPEFYSNVISTREYQDRLDTLGRVRQAGLKICCGGIVGMGESRQQRAGLIAQLANLNPYPESVPVNHLVQVEGTPLYGIEPLDPIEFVRTIAVARITMPKARVRLSAGRRQMGDAVQAMCFLAGANSIFYGDKLLTTGNPEAGDDLALLAKLGLKTHASTLTEAQKERCGG.

The Radical SAM core domain occupies 60–287 (GDVELATLLS…KARVRLSAGR (228 aa)). [4Fe-4S] cluster-binding residues include Cys75, Cys79, and Cys82. [2Fe-2S] cluster is bound by residues Cys119, Cys150, Cys210, and Arg282.

It belongs to the radical SAM superfamily. Biotin synthase family. In terms of assembly, homodimer. [4Fe-4S] cluster is required as a cofactor. [2Fe-2S] cluster serves as cofactor.

The catalysed reaction is (4R,5S)-dethiobiotin + (sulfur carrier)-SH + 2 reduced [2Fe-2S]-[ferredoxin] + 2 S-adenosyl-L-methionine = (sulfur carrier)-H + biotin + 2 5'-deoxyadenosine + 2 L-methionine + 2 oxidized [2Fe-2S]-[ferredoxin]. The protein operates within cofactor biosynthesis; biotin biosynthesis; biotin from 7,8-diaminononanoate: step 2/2. Catalyzes the conversion of dethiobiotin (DTB) to biotin by the insertion of a sulfur atom into dethiobiotin via a radical-based mechanism. In Albidiferax ferrireducens (strain ATCC BAA-621 / DSM 15236 / T118) (Rhodoferax ferrireducens), this protein is Biotin synthase.